Here is a 295-residue protein sequence, read N- to C-terminus: Bis(5'-nucleosyl)-tetraphosphatase, symmetrical (295 aa).

The tract at residues 271–295 (LSIEHPRHTHTPRRKAKKRHKRSPK) is disordered. Residues 277-295 (RHTHTPRRKAKKRHKRSPK) are compositionally biased toward basic residues.

This sequence belongs to the Ap4A hydrolase family.

The enzyme catalyses P(1),P(4)-bis(5'-adenosyl) tetraphosphate + H2O = 2 ADP + 2 H(+). Functionally, hydrolyzes diadenosine 5',5'''-P1,P4-tetraphosphate to yield ADP. This chain is Bis(5'-nucleosyl)-tetraphosphatase, symmetrical, found in Xylella fastidiosa (strain M23).